We begin with the raw amino-acid sequence, 526 residues long: MSNIKSSEISDILKMQLKGIDSRIKFEEIGRVLQVSDGVARIFGLNNAETGELLQFDSGDMAVVMNLEEDNVGTVLLGETSKVQEGDRVKRTKRIVSIPMKNGMLGRVVNPFGSPLDGKGPILGKEIDMPLERKAPGVIYRCPVVEPLQTGIKSIDAMIPIGRGQRELIIGDRQVGKTTISIDTIINQKANYETGDPIYCIYVAIGQKASTVANIVNTLKEYGALNYTIIVVAAASDPAAMQFYAPFAGAAIGEFFRDTGRHALVVYDDLSKHAVAYREVSLVLRRPSGREAYPGDIFYLHSRLLERAAKIINNDSVAASMNDLPNNLRGQVKGGGSLTALPIIETQAGDVSAYIPTNVISITDGQIFLETGLFNAGIRPAVNVGISVSRVGGKAQIKAMKKVAGTLKIDQAQYRELEAFTKFGGDMDAVTRATLDKGRKNVELLIQSQYNPLPVEKEIAIIFIGIKGLLSDVPVERVREFETEFLDILEMKYRKDILDMLKQGVLDEKIEKKLNTIASIVANNFK.

171-178 (GDRQVGKT) is a binding site for ATP.

It belongs to the ATPase alpha/beta chains family. F-type ATPases have 2 components, CF(1) - the catalytic core - and CF(0) - the membrane proton channel. CF(1) has five subunits: alpha(3), beta(3), gamma(1), delta(1), epsilon(1). CF(0) has three main subunits: a(1), b(2) and c(9-12). The alpha and beta chains form an alternating ring which encloses part of the gamma chain. CF(1) is attached to CF(0) by a central stalk formed by the gamma and epsilon chains, while a peripheral stalk is formed by the delta and b chains.

The protein localises to the cell inner membrane. It catalyses the reaction ATP + H2O + 4 H(+)(in) = ADP + phosphate + 5 H(+)(out). In terms of biological role, produces ATP from ADP in the presence of a proton gradient across the membrane. The alpha chain is a regulatory subunit. This Azobacteroides pseudotrichonymphae genomovar. CFP2 protein is ATP synthase subunit alpha.